The chain runs to 468 residues: Uronate isomerase (468 aa).

The protein belongs to the metallo-dependent hydrolases superfamily. Uronate isomerase family.

The catalysed reaction is D-glucuronate = D-fructuronate. The enzyme catalyses aldehydo-D-galacturonate = keto-D-tagaturonate. Its pathway is carbohydrate metabolism; pentose and glucuronate interconversion. The protein is Uronate isomerase of Lachnospira eligens (strain ATCC 27750 / DSM 3376 / VPI C15-48 / C15-B4) (Eubacterium eligens).